We begin with the raw amino-acid sequence, 639 residues long: ADP-ribosylation factor-binding protein GGA1 (639 aa).

Met1 carries the post-translational modification N-acetylmethionine. Residues Ala17–Ser147 enclose the VHS domain. The interval Lys114–Asp274 is interaction with ARF3. Positions Asp171–Arg299 constitute a GAT domain. Ser185 carries the post-translational modification Phosphoserine. The segment at Gly300–Pro509 is unstructured hinge. Disordered stretches follow at residues Leu320–Asp421 and Ser434–Pro492. At Ser355 the chain carries Phosphoserine; by CK2. The short motif at Asp358–Met362 is the Autoinhibitory element. Residues Gly381–Ala390 show a composition bias toward polar residues. Position 418 is a phosphoserine (Ser418). Positions Ser462–Ser480 are enriched in low complexity. Pro residues predominate over residues Pro481 to Pro490. A GAE domain is found at Ser510–Pro631.

This sequence belongs to the GGA protein family. In terms of assembly, monomer. Interacts with GGA2 and GGA3. Binds to clathrin and activated ARFs, including ARF1, ARF5 and ARF6. Interacts with RABEP1. Interacts with RABGEF1. Interacts with the type-I membrane proteins LRP3, M6PR/CD-MPR and IGF2R/CI-MPR. Interacts (via N-terminal VHS domain) with SORL1/sorLA and SORT1 (via C-terminal cytosolic domain). Interacts with EPN4. Interacts with CCDC91. Interacts with HEATR5B/p200a. Interacts with SYNRG/gamma-synergin. Interacts (via GAE doamin) with NECAP1 and NECAP2. Interacts (via GAE domain) with AFTPH/aftiphilin. Interacts with TSG101 and UBC. Interacts with RNF11. Interacts (via VHS domain) with BACE1 (via DXXLL motif); the interaction highly increases when BACE1 is phosphorylated at 'Ser-498'. Interacts with CNST. Interacts with ADRA2B. Interacts with ARL3; the interaction recruits, in collaboration with RABEP1, PKD1:PKD2 complex to trans-Golgi network and is required for ciliary targeting. Post-translationally, phosphorylated by CK2 and dephosphorylated by PP2A. Phosphorylation of GGA1 allows the internal DXXLL motif to bind the VHS domain and to inhibit the recognition of cargo signals. In terms of processing, ubiquitinated. As to expression, ubiquitously expressed.

The protein resides in the golgi apparatus. Its subcellular location is the trans-Golgi network membrane. It localises to the endosome membrane. The protein localises to the early endosome membrane. Functionally, plays a role in protein sorting and trafficking between the trans-Golgi network (TGN) and endosomes. Mediates the ARF-dependent recruitment of clathrin to the TGN and binds ubiquitinated proteins and membrane cargo molecules with a cytosolic acidic cluster-dileucine (DXXLL) motif. Mediates export of the GPCR receptor ADRA2B to the cell surface. Required for targeting PKD1:PKD2 complex from the trans-Golgi network to the cilium membrane. Regulates retrograde transport of proteins such as phosphorylated form of BACE1 from endosomes to the trans-Golgi network. This is ADP-ribosylation factor-binding protein GGA1 (GGA1) from Homo sapiens (Human).